Consider the following 160-residue polypeptide: Deoxyuridine 5'-triphosphate nucleotidohydrolase (160 aa).

8 residues coordinate dUMP: Ser80, Gly93, Asp96, Tyr99, Lys104, Arg149, Phe154, and Gly155.

This sequence belongs to the dUTPase family. Homotrimer. Mg(2+) serves as cofactor.

The enzyme catalyses dUTP + H2O = dUMP + diphosphate + H(+). The protein operates within pyrimidine metabolism; dUMP biosynthesis; dUMP from dCTP (dUTP route): step 2/2. Functionally, involved in nucleotide metabolism via production of dUMP, the immediate precursor of thymidine nucleotides, and decreases the intracellular concentration of dUTP so that uracil cannot be incorporated into DNA. The polypeptide is Deoxyuridine 5'-triphosphate nucleotidohydrolase (DUT1) (Debaryomyces hansenii (strain ATCC 36239 / CBS 767 / BCRC 21394 / JCM 1990 / NBRC 0083 / IGC 2968) (Yeast)).